Here is a 323-residue protein sequence, read N- to C-terminus: Acetyl-coenzyme A carboxylase carboxyl transferase subunit alpha (323 aa).

The region spanning 39–293 (RLSKKSQQLT…RRALADSLRQ (255 aa)) is the CoA carboxyltransferase C-terminal domain.

The protein belongs to the AccA family. In terms of assembly, acetyl-CoA carboxylase is a heterohexamer composed of biotin carboxyl carrier protein (AccB), biotin carboxylase (AccC) and two subunits each of ACCase subunit alpha (AccA) and ACCase subunit beta (AccD).

It localises to the cytoplasm. The catalysed reaction is N(6)-carboxybiotinyl-L-lysyl-[protein] + acetyl-CoA = N(6)-biotinyl-L-lysyl-[protein] + malonyl-CoA. The protein operates within lipid metabolism; malonyl-CoA biosynthesis; malonyl-CoA from acetyl-CoA: step 1/1. Functionally, component of the acetyl coenzyme A carboxylase (ACC) complex. First, biotin carboxylase catalyzes the carboxylation of biotin on its carrier protein (BCCP) and then the CO(2) group is transferred by the carboxyltransferase to acetyl-CoA to form malonyl-CoA. The polypeptide is Acetyl-coenzyme A carboxylase carboxyl transferase subunit alpha (Burkholderia multivorans (strain ATCC 17616 / 249)).